The chain runs to 273 residues: Bis(5'-nucleosyl)-tetraphosphatase, symmetrical (273 aa).

It belongs to the Ap4A hydrolase family.

It carries out the reaction P(1),P(4)-bis(5'-adenosyl) tetraphosphate + H2O = 2 ADP + 2 H(+). Functionally, hydrolyzes diadenosine 5',5'''-P1,P4-tetraphosphate to yield ADP. The chain is Bis(5'-nucleosyl)-tetraphosphatase, symmetrical from Histophilus somni (strain 2336) (Haemophilus somnus).